Reading from the N-terminus, the 232-residue chain is Enolase-phosphatase E1 (232 aa).

It belongs to the HAD-like hydrolase superfamily. MasA/MtnC family. Monomer. The cofactor is Mg(2+).

The catalysed reaction is 5-methylsulfanyl-2,3-dioxopentyl phosphate + H2O = 1,2-dihydroxy-5-(methylsulfanyl)pent-1-en-3-one + phosphate. It participates in amino-acid biosynthesis; L-methionine biosynthesis via salvage pathway; L-methionine from S-methyl-5-thio-alpha-D-ribose 1-phosphate: step 3/6. Its pathway is amino-acid biosynthesis; L-methionine biosynthesis via salvage pathway; L-methionine from S-methyl-5-thio-alpha-D-ribose 1-phosphate: step 4/6. Bifunctional enzyme that catalyzes the enolization of 2,3-diketo-5-methylthiopentyl-1-phosphate (DK-MTP-1-P) into the intermediate 2-hydroxy-3-keto-5-methylthiopentenyl-1-phosphate (HK-MTPenyl-1-P), which is then dephosphorylated to form the acireductone 1,2-dihydroxy-3-keto-5-methylthiopentene (DHK-MTPene). In Xanthomonas axonopodis pv. citri (strain 306), this protein is Enolase-phosphatase E1.